The chain runs to 118 residues: Holo-[acyl-carrier-protein] synthase (118 aa).

2 residues coordinate Mg(2+): Asp-8 and Glu-58.

This sequence belongs to the P-Pant transferase superfamily. AcpS family. Mg(2+) is required as a cofactor.

Its subcellular location is the cytoplasm. It carries out the reaction apo-[ACP] + CoA = holo-[ACP] + adenosine 3',5'-bisphosphate + H(+). In terms of biological role, transfers the 4'-phosphopantetheine moiety from coenzyme A to a Ser of acyl-carrier-protein. The polypeptide is Holo-[acyl-carrier-protein] synthase (Listeria welshimeri serovar 6b (strain ATCC 35897 / DSM 20650 / CCUG 15529 / CIP 8149 / NCTC 11857 / SLCC 5334 / V8)).